A 536-amino-acid chain; its full sequence is Phosphoenolpyruvate carboxykinase (ATP) (536 aa).

Substrate is bound by residues arginine 61, tyrosine 195, and lysine 201. Residues lysine 201, histidine 220, and 236–244 (GLSGTGKTT) each bind ATP. 2 residues coordinate Mn(2+): lysine 201 and histidine 220. Residue aspartate 257 participates in Mn(2+) binding. ATP is bound by residues glutamate 285, arginine 322, and threonine 447. Arginine 322 lines the substrate pocket.

This sequence belongs to the phosphoenolpyruvate carboxykinase (ATP) family. Mn(2+) serves as cofactor.

The protein localises to the cytoplasm. It carries out the reaction oxaloacetate + ATP = phosphoenolpyruvate + ADP + CO2. Its pathway is carbohydrate biosynthesis; gluconeogenesis. Involved in the gluconeogenesis. Catalyzes the conversion of oxaloacetate (OAA) to phosphoenolpyruvate (PEP) through direct phosphoryl transfer between the nucleoside triphosphate and OAA. The chain is Phosphoenolpyruvate carboxykinase (ATP) from Rhizobium johnstonii (strain DSM 114642 / LMG 32736 / 3841) (Rhizobium leguminosarum bv. viciae).